Consider the following 127-residue polypeptide: Oleate-induced peroxisomal protein POX18 (127 aa).

One can recognise an SCP2 domain in the interval 14 to 119 (FKELHEGLAD…KATAIESVFK (106 aa)). The tract at residues 33 to 41 (AVNAVIVIT) is hydrophobic. The interval 43–52 (KNKEGKEQSW) is hydrophilic.

In terms of assembly, monomer.

It localises to the peroxisome. It functions in the pathway lipid metabolism; fatty acid metabolism. Functionally, is involved in beta-oxidation of long-chain fatty acids. Its exact function is unknown, but possesses a nonspecific lipid-transfer activity, despite the absence of a cysteine residue thought to be essential for the activity of its mammalian counterparts. The chain is Oleate-induced peroxisomal protein POX18 (POX18) from Candida maltosa (Yeast).